The primary structure comprises 436 residues: Mannan endo-1,4-beta-mannosidase F (436 aa).

A signal peptide spans 1–18 (MRSLSSVALLSAIGAASA). Residues 19-54 (QAGPWGQCAGISHTGPTTCESGWSCVYLNDWYSQCQ) enclose the CBM1 domain. Residues 60 to 88 (SSSTTVSSTKQPSSTVAAPSSTTSAHTLP) are disordered. The ser-rich linker stretch occupies residues 79-113 (SSTTSAHTLPTGSGSFAKTDGLKFNIDGKTKYFAG). The tract at residues 114–436 (TNAYWLPFLT…CAVIDHISQI (323 aa)) is catalytic. Positions 146 and 260 each coordinate substrate. Glu-261 acts as the Proton donor in catalysis. Tyr-336 contacts substrate. Glu-370 functions as the Nucleophile in the catalytic mechanism. Trp-400 contributes to the substrate binding site.

This sequence belongs to the glycosyl hydrolase 5 (cellulase A) family.

The protein localises to the secreted. The catalysed reaction is Random hydrolysis of (1-&gt;4)-beta-D-mannosidic linkages in mannans, galactomannans and glucomannans.. Endo-1,4-mannanase, a crucial enzyme for depolymerization of seed galactomannans and wood galactoglucomannans. The protein is Mannan endo-1,4-beta-mannosidase F (manF) of Aspergillus clavatus (strain ATCC 1007 / CBS 513.65 / DSM 816 / NCTC 3887 / NRRL 1 / QM 1276 / 107).